A 326-amino-acid polypeptide reads, in one-letter code: L-lactate dehydrogenase (326 aa).

Residue 39–60 (DVVTGMPEGKALDDSQATSIAD) participates in NAD(+) binding. Residues R99, N131, and R162 each contribute to the substrate site. Residue N131 coordinates NAD(+). Residue H186 is the Proton acceptor of the active site.

The protein belongs to the LDH/MDH superfamily. LDH family. Homotetramer.

The catalysed reaction is (S)-lactate + NAD(+) = pyruvate + NADH + H(+). The protein operates within fermentation; pyruvate fermentation to lactate; (S)-lactate from pyruvate: step 1/1. This Toxoplasma gondii protein is L-lactate dehydrogenase.